A 900-amino-acid polypeptide reads, in one-letter code: DNA mismatch repair protein MutS (900 aa).

A disordered region spans residues 1–88 (MPGPSDDPTE…PAWAHHSQVD (88 aa)). Basic and acidic residues predominate over residues 56-68 (APADHNAADHDSN). Position 714–721 (714–721 (GPNASGKS)) interacts with ATP.

It belongs to the DNA mismatch repair MutS family.

Its function is as follows. This protein is involved in the repair of mismatches in DNA. It is possible that it carries out the mismatch recognition step. This protein has a weak ATPase activity. The polypeptide is DNA mismatch repair protein MutS (Parasynechococcus marenigrum (strain WH8102)).